Here is a 155-residue protein sequence, read N- to C-terminus: Endoribonuclease YbeY (155 aa).

3 residues coordinate Zn(2+): histidine 116, histidine 120, and histidine 126.

The protein belongs to the endoribonuclease YbeY family. Requires Zn(2+) as cofactor.

It localises to the cytoplasm. In terms of biological role, single strand-specific metallo-endoribonuclease involved in late-stage 70S ribosome quality control and in maturation of the 3' terminus of the 16S rRNA. The polypeptide is Endoribonuclease YbeY (Colwellia psychrerythraea (strain 34H / ATCC BAA-681) (Vibrio psychroerythus)).